Here is a 147-residue protein sequence, read N- to C-terminus: Small ribosomal subunit protein uS9 (147 aa).

This sequence belongs to the universal ribosomal protein uS9 family.

This Dictyostelium discoideum (Social amoeba) protein is Small ribosomal subunit protein uS9 (rps16).